A 680-amino-acid chain; its full sequence is ATPase family AAA domain-containing protein FIGL1 (680 aa).

3 disordered regions span residues 214–234 (YGNS…NQDR), 250–275 (FGTK…GAPN), and 288–352 (VRQK…GGKT). Over residues 295–308 (TESPSSCLSPQSDK) the composition is skewed to polar residues. Residues 313-323 (RGYGSRSGGLR) show a composition bias toward gly residues. Over residues 336–346 (TNGNNVGNLTS) the composition is skewed to polar residues. ATP contacts are provided by residues Ala406 and 446-451 (GTGKTM).

It belongs to the AAA ATPase family. Mg(2+) is required as a cofactor.

The protein resides in the nucleus. The enzyme catalyses ATP + H2O = ADP + phosphate + H(+). Functionally, involved in DNA double-strand break (DBS) repair via homologous recombination (HR). Limits class II meiotic crossover (CO) formation by regulating the invasion step of meiotic HR. May counteract DMC1 and RAD51-mediated inter-homolog strand invasion to limit CO formation. Functions independently of FANCM. The sequence is that of ATPase family AAA domain-containing protein FIGL1 from Arabidopsis thaliana (Mouse-ear cress).